A 640-amino-acid polypeptide reads, in one-letter code: DNA gyrase subunit B (640 aa).

The Toprim domain occupies 423–537 (AELYIVEGDS…NGNIYIAQPP (115 aa)). Residues E429, D502, and D504 each coordinate Mg(2+).

Belongs to the type II topoisomerase GyrB family. In terms of assembly, heterotetramer, composed of two GyrA and two GyrB chains. In the heterotetramer, GyrA contains the active site tyrosine that forms a transient covalent intermediate with DNA, while GyrB binds cofactors and catalyzes ATP hydrolysis. Mg(2+) is required as a cofactor. The cofactor is Mn(2+). Requires Ca(2+) as cofactor.

The protein localises to the cytoplasm. The catalysed reaction is ATP-dependent breakage, passage and rejoining of double-stranded DNA.. A type II topoisomerase that negatively supercoils closed circular double-stranded (ds) DNA in an ATP-dependent manner to modulate DNA topology and maintain chromosomes in an underwound state. Negative supercoiling favors strand separation, and DNA replication, transcription, recombination and repair, all of which involve strand separation. Also able to catalyze the interconversion of other topological isomers of dsDNA rings, including catenanes and knotted rings. Type II topoisomerases break and join 2 DNA strands simultaneously in an ATP-dependent manner. The sequence is that of DNA gyrase subunit B from Spiroplasma citri.